The sequence spans 125 residues: Large ribosomal subunit protein bL19 (125 aa).

Belongs to the bacterial ribosomal protein bL19 family.

Its function is as follows. This protein is located at the 30S-50S ribosomal subunit interface and may play a role in the structure and function of the aminoacyl-tRNA binding site. The chain is Large ribosomal subunit protein bL19 from Ehrlichia ruminantium (strain Welgevonden).